The chain runs to 323 residues: Syntaxin-42 (323 aa).

Topologically, residues 1-302 (MATRNRTTVY…QREGAMVKCA (302 aa)) are cytoplasmic. A t-SNARE coiled-coil homology domain is found at 227-289 (QHVSAERERE…EEGYKQLQKA (63 aa)). A helical; Anchor for type IV membrane protein transmembrane segment spans residues 303 to 323 (TILLVLCLIMIVLLILKNILF).

It belongs to the syntaxin family. In terms of assembly, interacts with VTI12 and SYP61 to form a t-SNARE complex and with VPS45. Expressed at low levels in roots, stems, flowers and leaves.

It localises to the golgi apparatus. Its subcellular location is the trans-Golgi network membrane. Its function is as follows. Contributes to the regulation of secretory and vacuolar transport pathways in the post-Golgi network, and to the maintenance of the Golgi apparatus and trans-Golgi network (TGN) morphologies. Vesicle trafficking protein that functions in the secretory pathway and mediates liposome fusion. Required for extracellular resistance responses to a fungal pathogen. Also involved in the protection of chloroplasts from salicylic acid-dependent biotic stress. The polypeptide is Syntaxin-42 (Arabidopsis thaliana (Mouse-ear cress)).